The following is a 382-amino-acid chain: MSTWLLPENIADVLPSEARKIEELRRRLLDRFRSYGYEMVMPPLLEYLESLLTSGGNELRLRTFKLVDQVSGRTLGLRADMTPQVARIDAHLLNRQGVTRLCYAGPVLHTRPRGLHASREQLQIGAEIYGHAGLEADQEIQQLMLDALHLTGLKKIRLDLCHAGVLAALFARDAAAAERGEALYEALAGKDVPRLNELTDDLGADTRAALRALPRLYGDASVLDDARRQLPALPEIARALDDLAHLAAQVKDAEVAIDLADLRGYAYHSGAMFAAYVDGVPNAVAHGGRYDHVGQAYGRARPATGFSLDLREIARISPVEARGAAILAPWKQDDALRAAVGALRDAGEVVIQALPGHDHVLDEFACDRALVERDGAWVIEPR.

The protein belongs to the class-II aminoacyl-tRNA synthetase family. HisZ subfamily. Heteromultimer composed of HisG and HisZ subunits.

The protein resides in the cytoplasm. The protein operates within amino-acid biosynthesis; L-histidine biosynthesis; L-histidine from 5-phospho-alpha-D-ribose 1-diphosphate: step 1/9. In terms of biological role, required for the first step of histidine biosynthesis. May allow the feedback regulation of ATP phosphoribosyltransferase activity by histidine. The sequence is that of ATP phosphoribosyltransferase regulatory subunit from Burkholderia pseudomallei (strain 668).